A 481-amino-acid chain; its full sequence is UDP-N-acetylmuramate--L-alanine ligase (481 aa).

Residue glycine 115–threonine 121 participates in ATP binding.

Belongs to the MurCDEF family.

The protein localises to the cytoplasm. It carries out the reaction UDP-N-acetyl-alpha-D-muramate + L-alanine + ATP = UDP-N-acetyl-alpha-D-muramoyl-L-alanine + ADP + phosphate + H(+). It functions in the pathway cell wall biogenesis; peptidoglycan biosynthesis. In terms of biological role, cell wall formation. The chain is UDP-N-acetylmuramate--L-alanine ligase from Rhodospirillum rubrum (strain ATCC 11170 / ATH 1.1.1 / DSM 467 / LMG 4362 / NCIMB 8255 / S1).